The following is a 621-amino-acid chain: Chaperone protein HtpG (621 aa).

The a; substrate-binding stretch occupies residues 1–341 (MSNQEYTFQT…SEDLPLNVSR (341 aa)). The b stretch occupies residues 342–547 (EILQQNKILA…GDEQNAMMAN (206 aa)). Residues 548–621 (WMRQMGQSVP…RLNSVLLKAL (74 aa)) form a c region.

This sequence belongs to the heat shock protein 90 family. In terms of assembly, homodimer.

The protein localises to the cytoplasm. Molecular chaperone. Has ATPase activity. This chain is Chaperone protein HtpG, found in Helicobacter pylori (strain ATCC 700392 / 26695) (Campylobacter pylori).